The primary structure comprises 232 residues: 7-cyano-7-deazaguanine synthase (232 aa).

8-18 contacts ATP; the sequence is FSGGQDSTTCL. Residues Cys187, Cys196, Cys199, and Cys202 each contribute to the Zn(2+) site.

The protein belongs to the QueC family. The cofactor is Zn(2+).

The catalysed reaction is 7-carboxy-7-deazaguanine + NH4(+) + ATP = 7-cyano-7-deazaguanine + ADP + phosphate + H2O + H(+). Its pathway is purine metabolism; 7-cyano-7-deazaguanine biosynthesis. In terms of biological role, catalyzes the ATP-dependent conversion of 7-carboxy-7-deazaguanine (CDG) to 7-cyano-7-deazaguanine (preQ(0)). In Vibrio vulnificus (strain YJ016), this protein is 7-cyano-7-deazaguanine synthase.